The chain runs to 551 residues: MSTPFPKTADKVKGVQILGPIPDEAKHIFNQETLAFVATLHRGFEARRQELLNNRKEQQKLRDQGFLPDFLPETEYIRNDSTWTGPALAPGLIDRRCEITGPTDRKMVINALNSNVATYMADFEDSLTPAWKNLVEGQVNLYDAVRRNLSATINGKQYNLNLEKGRHIPTLIVRPRGWHLTEKHVLVDGTPVSGGIFDFAVYFYNSAKEAIAQGFGPYFYLPKMEHHLEAKLWNDIFNYSQDYIGLKRGTIRASVLIETIPAVFQMDEIIYQLREHSAGLNCGRWDYIFSYIKCLRNHPDFILPDRSQVTMAAPFMSSYVKLLVHTTHKRKVHALGGMAAQIPIKDDEARNRAALENVTKDKLREVTLGCDSCWVAHPALVPVVLKVFNEHMKGPNQISLPPKEPFKPITQRDLLSPFVPGAKITEQGIRANIVIGISYIEAWLRNVGCVPINYLMEDAATAEVSRTQIWQWVTHGAKTDTGKVITKEYVKQLLDEEYAKLTKNAKPGNKFKRAFEYFAPEALGEKYSDFVTTLIYDDVTTIGRALPGERL.

R174 acts as the Proton acceptor in catalysis. Residue D458 is the Proton donor of the active site.

The protein belongs to the malate synthase family.

The protein localises to the glyoxysome. It carries out the reaction glyoxylate + acetyl-CoA + H2O = (S)-malate + CoA + H(+). The protein operates within carbohydrate metabolism; glyoxylate cycle; (S)-malate from isocitrate: step 2/2. The protein is Malate synthase, glyoxysomal (PMS1) of Candida tropicalis (Yeast).